Here is a 308-residue protein sequence, read N- to C-terminus: Ornithine carbamoyltransferase (308 aa).

Carbamoyl phosphate is bound by residues 53 to 56 (STRT), Gln-80, Arg-104, and 131 to 134 (HPCQ). L-ornithine is bound by residues Asn-162, Asp-225, and 229–230 (SM). Carbamoyl phosphate is bound by residues 265 to 266 (CL) and Arg-293.

This sequence belongs to the aspartate/ornithine carbamoyltransferase superfamily. OTCase family.

The protein localises to the cytoplasm. The catalysed reaction is carbamoyl phosphate + L-ornithine = L-citrulline + phosphate + H(+). The protein operates within amino-acid biosynthesis; L-arginine biosynthesis; L-arginine from L-ornithine and carbamoyl phosphate: step 1/3. Reversibly catalyzes the transfer of the carbamoyl group from carbamoyl phosphate (CP) to the N(epsilon) atom of ornithine (ORN) to produce L-citrulline. In Synechocystis sp. (strain ATCC 27184 / PCC 6803 / Kazusa), this protein is Ornithine carbamoyltransferase (argF).